The primary structure comprises 247 residues: Small ribosomal subunit protein uS2 (247 aa).

This sequence belongs to the universal ribosomal protein uS2 family.

In Cupriavidus metallidurans (strain ATCC 43123 / DSM 2839 / NBRC 102507 / CH34) (Ralstonia metallidurans), this protein is Small ribosomal subunit protein uS2.